The primary structure comprises 527 residues: MKTVDKSYMKELQTNHIHHNLSVAQLVEKILYRQEGILTSTGAVRATTGTYTGRSPEDKFTVKDEVSDQHVNWGKVNKPIQEEVFNQLLSKVISYLNEKQEIFKFQGFAGSDHTYRLPIQVINEYAWHNLFSRQLFITPTEEELNNHQAEFTVISAPGFKADPAIDGTNSETFILISFKKRIVLIGGTEYAGEIKKSIFSVMNYLLPQQDVLSMHCSANVGQEGDVALFFGLSGTGKTTLSADPYRKLIGDDEHGWSPNGVFNIEGGCYAKCINLSEEKEPQIYNAIRYGTVLENVILNDNSREPDYDDTSLTENTRAAYPLENIDNIINPSVAGHPNTIIFLTADASGTLPPISKLTKEQAMYHFLSGYTSKLAGTERGVTEPLATFSACFGSPFLPLAPSKYAEMLGKKIDMFDTNVFLINTGWTGGSYGVGDRIKLSFTRAMVHSALEGELNSIETITDEIFGLQIPAHVPGVPDELLVPKQTWGNKEAYMKEAQTLALKFHENFKKFTLASETIKQAGPLYKG.

3 residues coordinate substrate: Arg54, Tyr190, and Lys196. Residues Lys196, His215, and 231-239 (GLSGTGKTT) each bind ATP. Positions 196 and 215 each coordinate Mn(2+). Asp252 lines the Mn(2+) pocket. ATP is bound by residues Glu280, Arg317, 436-437 (RI), and Thr442. Residue Arg317 coordinates substrate.

Belongs to the phosphoenolpyruvate carboxykinase (ATP) family. The cofactor is Mn(2+).

Its subcellular location is the cytoplasm. The enzyme catalyses oxaloacetate + ATP = phosphoenolpyruvate + ADP + CO2. Its pathway is carbohydrate biosynthesis; gluconeogenesis. Involved in the gluconeogenesis. Catalyzes the conversion of oxaloacetate (OAA) to phosphoenolpyruvate (PEP) through direct phosphoryl transfer between the nucleoside triphosphate and OAA. This is Phosphoenolpyruvate carboxykinase (ATP) from Oceanobacillus iheyensis (strain DSM 14371 / CIP 107618 / JCM 11309 / KCTC 3954 / HTE831).